A 376-amino-acid polypeptide reads, in one-letter code: Enoyl-[acyl-carrier-protein] reductase, mitochondrial (376 aa).

The transit peptide at 1–12 (MLRTLRTSQLAR) directs the protein to the mitochondrion. Tyrosine 79 (proton donor) is an active-site residue. Residues asparagine 160, 183–186 (NSGV), 206–208 (RDR), 277–280 (YGGM), 302–304 (YWL), and lysine 368 each bind NADP(+).

Belongs to the zinc-containing alcohol dehydrogenase family. Quinone oxidoreductase subfamily. In terms of assembly, homodimer.

It is found in the mitochondrion matrix. It carries out the reaction a 2,3-saturated acyl-[ACP] + NADP(+) = a (2E)-enoyl-[ACP] + NADPH + H(+). Its function is as follows. Catalyzes the NADPH-dependent reduction of trans-2-enoyl thioesters in mitochondrial fatty acid synthesis (fatty acid synthesis type II). Fatty acid chain elongation in mitochondria uses acyl carrier protein (ACP) as an acyl group carrier, but the enzyme accepts both ACP and CoA thioesters as substrates in vitro. Required for respiration and the maintenance of the mitochondrial compartment. The polypeptide is Enoyl-[acyl-carrier-protein] reductase, mitochondrial (ETR1) (Yarrowia lipolytica (strain CLIB 122 / E 150) (Yeast)).